The chain runs to 160 residues: 2-C-methyl-D-erythritol 2,4-cyclodiphosphate synthase (160 aa).

Residues aspartate 10 and histidine 12 each contribute to the a divalent metal cation site. 4-CDP-2-C-methyl-D-erythritol 2-phosphate contacts are provided by residues 10 to 12 and 36 to 37; these read DVH and HS. Histidine 44 is an a divalent metal cation binding site. 4-CDP-2-C-methyl-D-erythritol 2-phosphate contacts are provided by residues 58–60, 63–67, 102–108, 134–137, phenylalanine 141, and arginine 144; these read DIG, FPDTD, AQAPKML, and TTTE.

Belongs to the IspF family. As to quaternary structure, homotrimer. A divalent metal cation serves as cofactor.

The catalysed reaction is 4-CDP-2-C-methyl-D-erythritol 2-phosphate = 2-C-methyl-D-erythritol 2,4-cyclic diphosphate + CMP. It functions in the pathway isoprenoid biosynthesis; isopentenyl diphosphate biosynthesis via DXP pathway; isopentenyl diphosphate from 1-deoxy-D-xylulose 5-phosphate: step 4/6. In terms of biological role, involved in the biosynthesis of isopentenyl diphosphate (IPP) and dimethylallyl diphosphate (DMAPP), two major building blocks of isoprenoid compounds. Catalyzes the conversion of 4-diphosphocytidyl-2-C-methyl-D-erythritol 2-phosphate (CDP-ME2P) to 2-C-methyl-D-erythritol 2,4-cyclodiphosphate (ME-CPP) with a corresponding release of cytidine 5-monophosphate (CMP). The chain is 2-C-methyl-D-erythritol 2,4-cyclodiphosphate synthase from Shewanella amazonensis (strain ATCC BAA-1098 / SB2B).